Reading from the N-terminus, the 208-residue chain is Large ribosomal subunit protein bL25 (208 aa).

Positions 178 to 208 (LPPQQSEVPEPDSEEEPKEPEAIKEKDNDGE) are disordered. The segment covering 186-195 (PEPDSEEEPK) has biased composition (acidic residues). Positions 196 to 208 (EPEAIKEKDNDGE) are enriched in basic and acidic residues.

Belongs to the bacterial ribosomal protein bL25 family. CTC subfamily. As to quaternary structure, part of the 50S ribosomal subunit; part of the 5S rRNA/L5/L18/L25 subcomplex. Contacts the 5S rRNA. Binds to the 5S rRNA independently of L5 and L18.

This is one of the proteins that binds to the 5S RNA in the ribosome where it forms part of the central protuberance. The sequence is that of Large ribosomal subunit protein bL25 from Bacillus pumilus (strain SAFR-032).